A 361-amino-acid chain; its full sequence is D-alanine--D-alanine ligase (361 aa).

In terms of domain architecture, ATP-grasp spans 144–350 (KLAAADAGLA…FMELTDRLIR (207 aa)). Residue 177 to 232 (VASLSFPMFVKPVSLGSSVGITKVNSESELAEAITHACSLDSKVLIEQAVKGREVE) participates in ATP binding. Positions 303, 317, and 319 each coordinate Mg(2+).

It belongs to the D-alanine--D-alanine ligase family. Mg(2+) serves as cofactor. Mn(2+) is required as a cofactor.

It localises to the cytoplasm. The catalysed reaction is 2 D-alanine + ATP = D-alanyl-D-alanine + ADP + phosphate + H(+). The protein operates within cell wall biogenesis; peptidoglycan biosynthesis. Its function is as follows. Cell wall formation. This chain is D-alanine--D-alanine ligase, found in Chlorobium luteolum (strain DSM 273 / BCRC 81028 / 2530) (Pelodictyon luteolum).